Consider the following 365-residue polypeptide: MAKVAKDLNPGVKKMSLGQLQSARGVACLGCKGTCSGFEPHSWRKICKSCKCSQEDHCLTSDLEDDRKIGRLLMDSKYSTLTARVKGGDGIRIYKRNRMIMTNPIATGKDPTFDTITYEWAPPGVTQKLGLQYMELIPKEKQPVTGTEGAFYRRRQLMHQLPIYDQDPSRCRGLLENELKLMEEFVKQYKSEALGVGEVALPGQGGLPKEEGKQQEKPEGAETTAATTNGSLSDPSKEVEYVCELCKGAAPPDSPVVYSDRAGYNKQWHPTCFVCAKCSEPLVDLIYFWKDGAPWCGRHYCESLRPRCSGCDEIIFAEDYQRVEDLAWHRKHFVCEGCEQLLSGRAYIVTKGQLLCPTCSKSKRS.

Residue Ser-16 is modified to Phosphoserine. The 108-residue stretch at Met-99–Gly-206 folds into the PET domain. Positions Ala-200–Pro-235 are disordered. Positions Pro-208–Gly-220 are enriched in basic and acidic residues. 2 consecutive LIM zinc-binding domains span residues Tyr-241 to Pro-306 and Arg-307 to Ser-365.

In terms of assembly, interacts with GATA1 and GATA4. Interacts with beta-dystroglycan. Interacts with GATA6. As to expression, expressed in the heart (at protein level). Expressed in many tissues with highest abundance in skeletal muscle.

The protein localises to the cytoplasm. The protein resides in the nucleus. Its function is as follows. Transcriptional cofactor that restricts GATA6 function by inhibiting DNA-binding, resulting in repression of GATA6 transcriptional activation of downstream target genes. Represses GATA6-mediated trans activation of lung- and cardiac tissue-specific promoters. Inhibits DNA-binding by GATA4 and GATA1 to the cTNC promoter. Plays a critical role in the development of cardiac hypertrophy via activation of calcineurin/nuclear factor of activated T-cells signaling pathway. The protein is LIM and cysteine-rich domains protein 1 (LMCD1) of Homo sapiens (Human).